A 216-amino-acid polypeptide reads, in one-letter code: Imidazole glycerol phosphate synthase subunit HisH (216 aa).

Residues 5–213 form the Glutamine amidotransferase type-1 domain; it reads RLAVIDYDAG…VEFVARRLPA (209 aa). Residue C83 is the Nucleophile of the active site. Residues H188 and E190 contribute to the active site.

As to quaternary structure, heterodimer of HisH and HisF.

The protein localises to the cytoplasm. The catalysed reaction is 5-[(5-phospho-1-deoxy-D-ribulos-1-ylimino)methylamino]-1-(5-phospho-beta-D-ribosyl)imidazole-4-carboxamide + L-glutamine = D-erythro-1-(imidazol-4-yl)glycerol 3-phosphate + 5-amino-1-(5-phospho-beta-D-ribosyl)imidazole-4-carboxamide + L-glutamate + H(+). It catalyses the reaction L-glutamine + H2O = L-glutamate + NH4(+). It functions in the pathway amino-acid biosynthesis; L-histidine biosynthesis; L-histidine from 5-phospho-alpha-D-ribose 1-diphosphate: step 5/9. IGPS catalyzes the conversion of PRFAR and glutamine to IGP, AICAR and glutamate. The HisH subunit catalyzes the hydrolysis of glutamine to glutamate and ammonia as part of the synthesis of IGP and AICAR. The resulting ammonia molecule is channeled to the active site of HisF. This is Imidazole glycerol phosphate synthase subunit HisH from Synechococcus sp. (strain JA-3-3Ab) (Cyanobacteria bacterium Yellowstone A-Prime).